We begin with the raw amino-acid sequence, 1159 residues long: MKKFRKVLDGLTTSSPVNPGGSPGCGSAAGTPSAAPTPRELEIQETLMSEHFQICKTVRHGFPYQPTALAFDPVQKILAIGSRSGGIRMYPFLSFPHLGRPGVDCHSQHESGAAVLQMQFLINEGALVTACADDTLHLWSLRQRLPAILHSLKFNRERITFCHLPFQSKWLYVGTERGNTHIVNIESFILSGYVIMWNKAIELSTKTHPGPVVHLSDSPKDEGKLLIGFESGTIVMWDLRAKRADFRIYYDEAIHSVSWHHEGRQFMCSHSDGSLSMWNMRNTAKPFQVTFPHGKTQRDGRKESCKPILKVEYKTSRNSSEAFVIFSGGLSYDKAGRRPTLTIMHGKAITVLEMDYPIVDFMVLCETPYLNEVQEPYAVVVLLEKDFVVVDLTQSNFPIFENPYPMDVHESPVTCTAYFADCPPDIIPVLYSIGAKHKKTGYSHKEWPVSGGTWTVGSQTYPEIIITGHADGSIKFWDATAITLQMLYKLKTSKVFEKPKTGDMGRSADLVEEDPYAVQMISWCPQSRIFCVVGISAHVILYRFSKHDANTIITSLELRLQCEMEDVISPSDTENTPCFSDPSGHSPQPQPPSPRSNTPDSVRDSIPCLKVKDRMIRMPPGYQAELVVQLLWVDGEPPQQITCLDLNSAYGLLALGNCNGLAVVDYLQKTILLCMSTLELYGSADPFQRLTRSPRKNRQSTSGLTELSDNQVSLDLERSKSPTSDHVNGHCTSPTSQPCPSGRARVPGGPEGPRLARRGPGRPPFRKAQSAACMEVSLPVSSLTEENSFSRSRSSSVSSIDRETKEAVTTLQFAESYGRKSDSLPTPCLWVGTSLGLVLIIPMSIPTDEQERQEDPVTVAPTGTVLMLKGSVLRFGFLDCGGALINSPYEVWRDQHAPDDPDRPRKRKLVNFSPSSSQEACGDGHLAVVCSERQAKVFYMPSQACLYVHNITESSFVLRADVVSVSNSVCLACFCANGHIMILSLPSLRPLLDVSYLPLTDMRIARTFCFTNGGQALYLCSPTEIQRITYSQEMCETLGELFTPIETPEAQNRGFLKGFFGGNAQTFDREELFGEASAGKASRSLAQHIPGQGGIEGMKAAAGGVVGDLARARIALDERGQRLGELEERTALMMTSAETFSKHAHELMLKCKDKKWYQF.

Positions 1 to 37 (MKKFRKVLDGLTTSSPVNPGGSPGCGSAAGTPSAAPT) are disordered. The span at 25–37 (CGSAAGTPSAAPT) shows a compositional bias: low complexity. WD repeat units follow at residues 67 to 108 (TALA…CHSQ), 115 to 154 (VLQM…SLKF), 159 to 195 (ITFC…GYVI), 214 to 248 (HLSD…DFRI), 254 to 286 (IHSV…TAKP), 307 to 350 (PILK…KAIT), 358 to 392 (IVDF…VVDL), 414 to 491 (TCTA…YKLK), 519 to 628 (QMIS…ELVV), and 642 to 703 (TCLD…STSG). Disordered stretches follow at residues 571-604 (SDTE…SVRD) and 690-770 (LTRS…KAQS). 2 stretches are compositionally biased toward polar residues: residues 699–713 (QSTS…NQVS) and 721–739 (SPTS…SQPC). WD repeat units follow at residues 808–865 (VTTL…TGTV), 874–946 (RFGF…QACL), 951–995 (ITES…LDVS), and 1009–1032 (CFTN…TYSQ). In terms of domain architecture, v-SNARE coiled-coil homology spans 1094–1154 (GIEGMKAAAG…HELMLKCKDK (61 aa)).

It belongs to the WD repeat L(2)GL family.

The protein localises to the cytoplasm. It localises to the cell membrane. The protein resides in the membrane. Its function is as follows. May play a role in vesicle trafficking and exocytosis. The sequence is that of Syntaxin-binding protein 5-like (stxbp5l) from Danio rerio (Zebrafish).